We begin with the raw amino-acid sequence, 78 residues long: Acyl carrier protein (78 aa).

The region spanning S2–Q77 is the Carrier domain. The residue at position 37 (S37) is an O-(pantetheine 4'-phosphoryl)serine.

This sequence belongs to the acyl carrier protein (ACP) family. 4'-phosphopantetheine is transferred from CoA to a specific serine of apo-ACP by AcpS. This modification is essential for activity because fatty acids are bound in thioester linkage to the sulfhydryl of the prosthetic group.

It localises to the cytoplasm. Its pathway is lipid metabolism; fatty acid biosynthesis. In terms of biological role, carrier of the growing fatty acid chain in fatty acid biosynthesis. This Pseudomonas entomophila (strain L48) protein is Acyl carrier protein.